The primary structure comprises 648 residues: Hemagglutinin-esterase-fusion glycoprotein (648 aa).

The N-terminal stretch at 1 to 7 (MLGLTEA) is a signal peptide. The segment at 8–33 (EKIKICLQKQVNSSFSLHNGFGGNLY) is fusion domain-1. Residues 8-623 (EKIKICLQKQ…QSDPFYWGSS (616 aa)) are Extracellular-facing. 4 disulfides stabilise this stretch: cysteine 13/cysteine 576, cysteine 203/cysteine 245, cysteine 222/cysteine 309, and cysteine 230/cysteine 282. Residues asparagine 19 and asparagine 54 are each glycosylated (N-linked (GlcNAc...) asparagine; by host). Residues 34 to 151 (ATEEKRMFEL…KLNFQKSIYE (118 aa)) form an esterase domain-1 region. The active-site Nucleophile is the serine 64. Residues asparagine 137 and asparagine 182 are each glycosylated (N-linked (GlcNAc...) asparagine; by host). Positions 151 to 303 (ELASQSHCMS…VRSSPRFLLM (153 aa)) are N-acetyl-9-O-acetylneuraminic acid binding. The esterase domain-2 stretch occupies residues 303–357 (MPERSYCFDMKEKGPVTAVQSIWGKGRESDYAVDQACLSTPGCMLIQKQKPYIGE). Positions 358-643 (ADDHHGDQEM…LAALVISGIA (286 aa)) are fusion domain-2. Catalysis depends on charge relay system residues aspartate 359 and histidine 362. 3 N-linked (GlcNAc...) asparagine; by host glycosylation sites follow: asparagine 388, asparagine 545, and asparagine 596. A helical transmembrane segment spans residues 624 to 644 (LGLAITAAISLAALVISGIAI). Residues 645-648 (CRTK) are Cytoplasmic-facing.

The protein belongs to the influenza viruses hemagglutinin family. As to quaternary structure, homotrimer of disulfide-linked HEF1-HEF2. Post-translationally, in natural infection, inactive HEF is matured into HEF1 and HEF2 outside the cell by one or more trypsin-like, arginine-specific endoprotease.

Its subcellular location is the virion membrane. The protein localises to the host cell membrane. The catalysed reaction is N-acetyl-9-O-acetylneuraminate + H2O = N-acetylneuraminate + acetate + H(+). The enzyme catalyses N-acetyl-4-O-acetylneuraminate + H2O = N-acetylneuraminate + acetate + H(+). Its function is as follows. Binds to the N-acetyl-9-O-acetylneuraminic acid residues on the cell surface, bringing about the attachment of the virus particle to the cell. Plays a major role in the determination of host range restriction and virulence. Class I viral fusion protein. Responsible for penetration of the virus into the cell cytoplasm by mediating the fusion of the membrane of the endocytosed virus particle with the endosomal membrane. Low pH in endosomes induce an irreversible conformational change in HEF2, releasing the fusion hydrophobic peptide. Several trimers are required to form a competent fusion pore. Displays a receptor-destroying activity which is a neuraminidate-O-acetyl esterase. This activity cleaves off any receptor on the cell surface, which would otherwise prevent virions release. These cleavages prevent self-aggregation and ensure the efficient spread of the progeny virus from cell to cell. This Homo sapiens (Human) protein is Hemagglutinin-esterase-fusion glycoprotein.